A 146-amino-acid polypeptide reads, in one-letter code: Large ribosomal subunit protein uL15 (146 aa).

Residues 1–13 (MKLHELKAAEGSR) show a composition bias toward basic and acidic residues. The tract at residues 1–56 (MKLHELKAAEGSRRVRNRVGRGAGSGNGKTSGRGQKGQKARSGGGVRPGFEGGQLP) is disordered. Gly residues-rich tracts occupy residues 21–35 (RGAGSGNGKTSGRGQ) and 42–52 (SGGGVRPGFEG).

This sequence belongs to the universal ribosomal protein uL15 family. Part of the 50S ribosomal subunit.

Functionally, binds to the 23S rRNA. This chain is Large ribosomal subunit protein uL15, found in Staphylococcus haemolyticus (strain JCSC1435).